The following is a 107-amino-acid chain: Large ribosomal subunit protein uL24 (107 aa).

The protein belongs to the universal ribosomal protein uL24 family. In terms of assembly, part of the 50S ribosomal subunit.

Functionally, one of two assembly initiator proteins, it binds directly to the 5'-end of the 23S rRNA, where it nucleates assembly of the 50S subunit. In terms of biological role, one of the proteins that surrounds the polypeptide exit tunnel on the outside of the subunit. This chain is Large ribosomal subunit protein uL24, found in Gluconacetobacter diazotrophicus (strain ATCC 49037 / DSM 5601 / CCUG 37298 / CIP 103539 / LMG 7603 / PAl5).